Consider the following 277-residue polypeptide: Ras suppressor protein 1 (277 aa).

Residues Met-1–Asp-24 are disordered. An N-acetylserine modification is found at Ser-2. Residues Lys-7–Asp-24 are compositionally biased toward basic and acidic residues. LRR repeat units follow at residues His-41 to Lys-63, Asn-64 to Leu-85, Lys-87 to Pro-109, Ala-110 to Leu-133, Thr-135 to Leu-156, Lys-158 to Leu-179, and Gln-181 to Leu-202. The disordered stretch occupies residues Met-250–Arg-277. Positions Pro-256–Lys-265 are enriched in basic and acidic residues.

Its function is as follows. Potentially plays a role in the Ras signal transduction pathway. Capable of suppressing v-Ras transformation in vitro. The protein is Ras suppressor protein 1 (RSU1) of Homo sapiens (Human).